A 900-amino-acid polypeptide reads, in one-letter code: Chromodomain-helicase-DNA-binding protein 1-like (900 aa).

The Helicase ATP-binding domain maps to 52-217 (VQCFHCQNGC…YSLLCVVEPD (166 aa)). 65-72 (DEMGLGKT) lines the ATP pocket. A DEAH box motif is present at residues 168–171 (DEAH). A Helicase C-terminal domain is found at 345-507 (LLDRLLAFLY…QKPSAEADFQ (163 aa)). Position 534 is a phosphoserine (S534). The segment at 546-569 (PDALPAAAAAGGGSLEPEEGSELE) is disordered. Residues 606–640 (TLLEKTSHGGRTLRNKGSVLIPGLAEGPIKRKKIL) are regulatory linker segment (RLS). Phosphoserine occurs at positions 612, 623, and 641. The required for ATPase activity stretch occupies residues 620-678 (NKGSVLIPGLAEGPIKRKKILSPEELEDRRKKRQEAAAKRKRLMEEKRKEKEEAEHRKK). Residues 641–673 (SPEELEDRRKKRQEAAAKRKRLMEEKRKEKEEA) are disordered. The stretch at 643-680 (EELEDRRKKRQEAAAKRKRLMEEKRKEKEEAEHRKKMA) forms a coiled coil. Positions 653 to 673 (QEAAAKRKRLMEEKRKEKEEA) are enriched in basic and acidic residues. The region spanning 709-900 (SAELAYEDLD…ASSSSAPLVP (192 aa)) is the Macro domain. A Phosphoserine modification is found at S894.

This sequence belongs to the SNF2/RAD54 helicase family. Interacts with nucleosomes; interacts with the acidic patch of histones. Interacts (via macro domain) with PARP1; interacts only when PARP1 is poly-ADP-ribosylated (PARylated). Interacts with CIAO1.

Its subcellular location is the nucleus. The protein localises to the chromosome. The enzyme catalyses ATP + H2O = ADP + phosphate + H(+). Adopts an inactive conformation in absence of DNA damage. Binding to poly-ADP-ribosylated histones activates the ATP-dependent chromatin remodeler activity. Its function is as follows. ATP-dependent chromatin remodeler that mediates chromatin-remodeling following DNA damage. Recruited to DNA damage sites through interaction with poly-ADP-ribose: specifically recognizes and binds histones that are poly-ADP-ribosylated on serine residues in response to DNA damage. Poly-ADP-ribose-binding activates the ATP-dependent chromatin remodeler activity, thereby regulating chromatin during DNA repair. Catalyzes nucleosome sliding away from DNA breaks in an ATP-dependent manner. Chromatin remodeling activity promotes PARP2 removal from chromatin. The protein is Chromodomain-helicase-DNA-binding protein 1-like (Chd1l) of Mus musculus (Mouse).